A 252-amino-acid chain; its full sequence is 5'-nucleotidase SurE (252 aa).

A divalent metal cation is bound by residues aspartate 8, aspartate 9, serine 39, and asparagine 95.

This sequence belongs to the SurE nucleotidase family. A divalent metal cation serves as cofactor.

The protein resides in the cytoplasm. The catalysed reaction is a ribonucleoside 5'-phosphate + H2O = a ribonucleoside + phosphate. Its function is as follows. Nucleotidase that shows phosphatase activity on nucleoside 5'-monophosphates. This chain is 5'-nucleotidase SurE, found in Clostridium botulinum (strain ATCC 19397 / Type A).